The following is a 178-amino-acid chain: Adenine phosphoribosyltransferase (178 aa).

The protein belongs to the purine/pyrimidine phosphoribosyltransferase family. Homodimer.

The protein resides in the cytoplasm. It catalyses the reaction AMP + diphosphate = 5-phospho-alpha-D-ribose 1-diphosphate + adenine. It functions in the pathway purine metabolism; AMP biosynthesis via salvage pathway; AMP from adenine: step 1/1. In terms of biological role, catalyzes a salvage reaction resulting in the formation of AMP, that is energically less costly than de novo synthesis. The chain is Adenine phosphoribosyltransferase from Streptomyces clavuligerus.